A 485-amino-acid chain; its full sequence is Sulfate adenylyltransferase subunit 1 (485 aa).

Positions 30–243 (KGLLRFLTCG…ELLETIDTQR (214 aa)) constitute a tr-type G domain. A G1 region spans residues 39–46 (GSVDDGKS). 39-46 (GSVDDGKS) lines the GTP pocket. A G2 region spans residues 97 to 101 (GITID). Positions 118-121 (DTPG) are G3. Residues 118–122 (DTPGH) and 173–176 (NKMD) each bind GTP. Residues 173–176 (NKMD) form a G4 region. A G5 region spans residues 210–212 (SAL).

It belongs to the TRAFAC class translation factor GTPase superfamily. Classic translation factor GTPase family. CysN/NodQ subfamily. As to quaternary structure, heterodimer composed of CysD, the smaller subunit, and CysN.

The enzyme catalyses sulfate + ATP + H(+) = adenosine 5'-phosphosulfate + diphosphate. It participates in sulfur metabolism; hydrogen sulfide biosynthesis; sulfite from sulfate: step 1/3. Its function is as follows. With CysD forms the ATP sulfurylase (ATPS) that catalyzes the adenylation of sulfate producing adenosine 5'-phosphosulfate (APS) and diphosphate, the first enzymatic step in sulfur assimilation pathway. APS synthesis involves the formation of a high-energy phosphoric-sulfuric acid anhydride bond driven by GTP hydrolysis by CysN coupled to ATP hydrolysis by CysD. This Shewanella oneidensis (strain ATCC 700550 / JCM 31522 / CIP 106686 / LMG 19005 / NCIMB 14063 / MR-1) protein is Sulfate adenylyltransferase subunit 1.